A 122-amino-acid chain; its full sequence is Small ribosomal subunit protein uS13 (122 aa).

The disordered stretch occupies residues 98-122; the sequence is VRGQRTHTNARTRKGPAKAIAGKKK.

This sequence belongs to the universal ribosomal protein uS13 family. As to quaternary structure, part of the 30S ribosomal subunit. Forms a loose heterodimer with protein S19. Forms two bridges to the 50S subunit in the 70S ribosome.

Functionally, located at the top of the head of the 30S subunit, it contacts several helices of the 16S rRNA. In the 70S ribosome it contacts the 23S rRNA (bridge B1a) and protein L5 of the 50S subunit (bridge B1b), connecting the 2 subunits; these bridges are implicated in subunit movement. Contacts the tRNAs in the A and P-sites. This chain is Small ribosomal subunit protein uS13, found in Roseobacter denitrificans (strain ATCC 33942 / OCh 114) (Erythrobacter sp. (strain OCh 114)).